The primary structure comprises 360 residues: MLVWLAEHLVKYYSGFNVFSYLTFRAIVSLLTALFISLWMGPRMIAHLQKLSFGQVVRNDGPESHFSKRGTPTMGGIMILTAIVISVLLWAYPSNPYVWCVLVVLVGYGVIGFVDDYRKVVRKDTKGLIARWKYFWMSVIALGVAFALYLAGKDTPATQLVVPFFKDVMPQLGLFYILLAYFVIVGTGNAVNLTDGLDGLAIMPTVFVAGGFALVAWATGNMNFASYLHIPYLRHAGELVIVCTAIVGAGLGFLWFNTYPAQVFMGDVGSLALGGALGIIAVLLRQEFLLVIMGGVFVVETLSVILQVGSFKLRGQRIFRMAPIHHHYELKGWPEPRVIVRFWIISLMLVLIGLATLKVR.

Residues 1 to 25 (MLVWLAEHLVKYYSGFNVFSYLTFR) lie on the Periplasmic side of the membrane. The helical transmembrane segment at 26–46 (AIVSLLTALFISLWMGPRMIA) threads the bilayer. The Cytoplasmic portion of the chain corresponds to 47–71 (HLQKLSFGQVVRNDGPESHFSKRGT). Residues 72–92 (PTMGGIMILTAIVISVLLWAY) traverse the membrane as a helical segment. Residue Pro93 is a topological domain, periplasmic. Residues 94–114 (SNPYVWCVLVVLVGYGVIGFV) traverse the membrane as a helical segment. At 115–131 (DDYRKVVRKDTKGLIAR) the chain is on the cytoplasmic side. The chain crosses the membrane as a helical span at residues 132 to 152 (WKYFWMSVIALGVAFALYLAG). Over 153-167 (KDTPATQLVVPFFKD) the chain is Periplasmic. A helical transmembrane segment spans residues 168–188 (VMPQLGLFYILLAYFVIVGTG). Topologically, residues 189-198 (NAVNLTDGLD) are cytoplasmic. Residues 199–219 (GLAIMPTVFVAGGFALVAWAT) traverse the membrane as a helical segment. The Periplasmic portion of the chain corresponds to 220-235 (GNMNFASYLHIPYLRH). A helical transmembrane segment spans residues 236–256 (AGELVIVCTAIVGAGLGFLWF). Residues 257–262 (NTYPAQ) are Cytoplasmic-facing. Residues 263-283 (VFMGDVGSLALGGALGIIAVL) traverse the membrane as a helical segment. Topologically, residues 284-287 (LRQE) are periplasmic. A helical membrane pass occupies residues 288-308 (FLLVIMGGVFVVETLSVILQV). Over 309-337 (GSFKLRGQRIFRMAPIHHHYELKGWPEPR) the chain is Cytoplasmic. Residues 338–358 (VIVRFWIISLMLVLIGLATLK) form a helical membrane-spanning segment. Over 359–360 (VR) the chain is Periplasmic.

It belongs to the glycosyltransferase 4 family. MraY subfamily. The cofactor is Mg(2+).

The protein resides in the cell inner membrane. It carries out the reaction UDP-N-acetyl-alpha-D-muramoyl-L-alanyl-gamma-D-glutamyl-meso-2,6-diaminopimeloyl-D-alanyl-D-alanine + di-trans,octa-cis-undecaprenyl phosphate = di-trans,octa-cis-undecaprenyl diphospho-N-acetyl-alpha-D-muramoyl-L-alanyl-D-glutamyl-meso-2,6-diaminopimeloyl-D-alanyl-D-alanine + UMP. The protein operates within cell wall biogenesis; peptidoglycan biosynthesis. In terms of biological role, catalyzes the initial step of the lipid cycle reactions in the biosynthesis of the cell wall peptidoglycan: transfers peptidoglycan precursor phospho-MurNAc-pentapeptide from UDP-MurNAc-pentapeptide onto the lipid carrier undecaprenyl phosphate, yielding undecaprenyl-pyrophosphoryl-MurNAc-pentapeptide, known as lipid I. This Shigella boydii serotype 18 (strain CDC 3083-94 / BS512) protein is Phospho-N-acetylmuramoyl-pentapeptide-transferase.